A 592-amino-acid chain; its full sequence is Potassium-transporting ATPase potassium-binding subunit (592 aa).

A run of 11 helical transmembrane segments spans residues 7–27, 71–91, 136–156, 179–199, 287–307, 314–334, 411–431, 449–469, 473–493, 515–535, and 559–579; these read LQTV…GTFM, VLFN…QHLL, GLTV…IAVI, LYIL…QGVI, LEIL…GAMV, WTLL…LQGV, GLYT…LMIG, SVVT…IAMI, AVAA…YAFA, ILGA…VLAM, and FALW…FPAL.

Belongs to the KdpA family. In terms of assembly, the system is composed of three essential subunits: KdpA, KdpB and KdpC.

The protein localises to the cell inner membrane. Its function is as follows. Part of the high-affinity ATP-driven potassium transport (or Kdp) system, which catalyzes the hydrolysis of ATP coupled with the electrogenic transport of potassium into the cytoplasm. This subunit binds the periplasmic potassium ions and delivers the ions to the membrane domain of KdpB through an intramembrane tunnel. The polypeptide is Potassium-transporting ATPase potassium-binding subunit (Geobacter sulfurreducens (strain ATCC 51573 / DSM 12127 / PCA)).